The following is a 95-amino-acid chain: uncharacterized protein (95 aa).

The segment at residues 1–24 is a signal peptide (or 21); the sequence is MKKLATLTALAGALTMAVATAAQA. A compositionally biased stretch (basic and acidic residues) spans 55-89; the sequence is EGKCGADKAKSAEGKCGEGKCGADKAKSAEGKCGE. A disordered region spans residues 55 to 95; it reads EGKCGADKAKSAEGKCGEGKCGADKAKSAEGKCGEGKCGSK.

This is an uncharacterized protein from Haemophilus influenzae (strain ATCC 51907 / DSM 11121 / KW20 / Rd).